The following is a 310-amino-acid chain: Protoheme IX farnesyltransferase (310 aa).

9 consecutive transmembrane segments (helical) span residues 37–57 (LITV…DVLL), 64–84 (LTLL…CYLN), 113–133 (ILAL…IVNH), 134–154 (VAAV…TMWL), 159–181 (TINT…AAVT), 186–208 (IDAW…ALAM), 215–237 (RAAG…QIVW), 257–277 (MLVM…GLKI), and 290–310 (MFFF…LVSL).

This sequence belongs to the UbiA prenyltransferase family. Protoheme IX farnesyltransferase subfamily. As to quaternary structure, interacts with CtaA.

It localises to the cell membrane. It carries out the reaction heme b + (2E,6E)-farnesyl diphosphate + H2O = Fe(II)-heme o + diphosphate. It functions in the pathway porphyrin-containing compound metabolism; heme O biosynthesis; heme O from protoheme: step 1/1. In terms of biological role, converts heme B (protoheme IX) to heme O by substitution of the vinyl group on carbon 2 of heme B porphyrin ring with a hydroxyethyl farnesyl side group. This Exiguobacterium sibiricum (strain DSM 17290 / CCUG 55495 / CIP 109462 / JCM 13490 / 255-15) protein is Protoheme IX farnesyltransferase.